The chain runs to 309 residues: MPIRVLDELPAVNFLREENVFVMTTSRAPGQEIRPLKVLILNLMPKKIETENQFLRLLSNSPLQVDIQLLRIDARESRNTPAEHLNNFYCNFDDICDQNFDGLIVTGAPLGLVEFNDVAYWPQIRQVLEWAKDHVTSTLFVCWAVQAALNILYGIPKQTRTDKLSGVYEHHILHPHALLTRGFDDSFLAPHSRYADFPAALIRDYTDLEILAETEEGDAYLFASKDKRIAFVTGHPEYDAHTLAGEYFRDVEAGLNPEVPYNYFPKNDPQNIPRATWRSHGNLLFTNWLNYYVYQITPYDLRHMNPTLD.

The active-site Acyl-thioester intermediate is cysteine 142. Residues lysine 163 and serine 192 each coordinate substrate. Histidine 235 acts as the Proton acceptor in catalysis. Residue glutamate 237 is part of the active site. A substrate-binding site is contributed by arginine 249.

Belongs to the MetA family. Homodimer.

It localises to the cytoplasm. It catalyses the reaction L-homoserine + succinyl-CoA = O-succinyl-L-homoserine + CoA. Its pathway is amino-acid biosynthesis; L-methionine biosynthesis via de novo pathway; O-succinyl-L-homoserine from L-homoserine: step 1/1. Its function is as follows. Transfers a succinyl group from succinyl-CoA to L-homoserine, forming succinyl-L-homoserine. This is Homoserine O-succinyltransferase from Salmonella gallinarum (strain 287/91 / NCTC 13346).